A 1013-amino-acid chain; its full sequence is GPI ethanolamine phosphate transferase 3 (1013 aa).

The chain crosses the membrane as a helical span at residues 41 to 61 (TLYIFLYSALAALQFIAIAFF). N-linked (GlcNAc...) asparagine glycans are attached at residues Asn-184, Asn-205, Asn-336, Asn-399, and Asn-423. A run of 3 helical transmembrane segments spans residues 447–467 (YYSI…LITI), 484–504 (VPTI…VFYV), and 515–535 (LWAS…VPIF). A glycan (N-linked (GlcNAc...) asparagine) is linked at Asn-539. 4 consecutive transmembrane segments (helical) span residues 558–578 (VAAF…FTIW), 582–602 (IVSF…VFLP), 643–663 (IVGG…SLIT), and 682–702 (NYSF…PACI). An N-linked (GlcNAc...) asparagine glycan is attached at Asn-707. Residues 715 to 735 (AAPIWIGMLMKSILFVNFIYW) form a helical membrane-spanning segment. Residues Asn-742, Asn-750, and Asn-755 are each glycosylated (N-linked (GlcNAc...) asparagine). 7 consecutive transmembrane segments (helical) span residues 761–781 (IVVG…PLCI), 802–822 (NAYG…ILLF), 825–845 (PLAQ…LEIF), 868–888 (FFST…GFIL), 899–919 (LGIV…VALL), 943–963 (GMLL…VTNF), and 977–997 (FMFA…ITIA).

The protein belongs to the PIGG/PIGN/PIGO family. PIGO subfamily.

It is found in the endoplasmic reticulum membrane. It participates in glycolipid biosynthesis; glycosylphosphatidylinositol-anchor biosynthesis. Involved in glycosylphosphatidylinositol-anchor biosynthesis. Transfers ethanolamine phosphate to the GPI third mannose which links the GPI-anchor to the C-terminus of the proteins by an amide bond. Involved in cell wall biosynthesis. The protein is GPI ethanolamine phosphate transferase 3 (GPI13) of Eremothecium gossypii (strain ATCC 10895 / CBS 109.51 / FGSC 9923 / NRRL Y-1056) (Yeast).